A 252-amino-acid chain; its full sequence is Protein BTG3 (252 aa).

Residues 138–162 are disordered; that stretch reads VTSDYHSGSSSSDEETSKEMEVKPS.

This sequence belongs to the BTG family. Ubiquitous. High expression in the ventricular zone of the developing central nervous system. High in ovary, testis, prostate, thymus and lung.

In terms of biological role, overexpression impairs serum-induced cell cycle progression from the G0/G1 to S phase. In Homo sapiens (Human), this protein is Protein BTG3 (BTG3).